The following is a 145-amino-acid chain: uncharacterized protein (145 aa).

A helical membrane pass occupies residues 46–66 (FFFLFFLFFFFFFTFQFLVAF).

The protein localises to the membrane. This is an uncharacterized protein from Saccharomyces cerevisiae (strain ATCC 204508 / S288c) (Baker's yeast).